The chain runs to 609 residues: Replication protein A 70 kDa DNA-binding subunit (609 aa).

The segment at 113 to 163 (GNPQPYNDGQPQPAAPAPASAPAPAPSKLQNNSAPPPSMNRGTSKLFGGGS) is disordered. Over residues 125-137 (PAAPAPASAPAPA) the composition is skewed to pro residues. Positions 188–272 (WTVRARVTNK…VKNDYEMTFN (85 aa)) form a DNA-binding region, OB. A C4-type zinc finger spans residues 472 to 494 (CPSQDCNKKVIDQQNGLFRCEKC).

It belongs to the replication factor A protein 1 family. As to quaternary structure, component of the heterotrimeric canonical replication protein A complex (RPA). Interacts with rpain-a.

Its subcellular location is the nucleus. The protein localises to the PML body. Its function is as follows. As part of the heterotrimeric replication protein A complex (RPA/RP-A), binds and stabilizes single-stranded DNA intermediates, that form during DNA replication or upon DNA stress. It prevents their reannealing and in parallel, recruits and activates different proteins and complexes involved in DNA metabolism. Thereby, it plays an essential role both in DNA replication and the cellular response to DNA damage. In Xenopus laevis (African clawed frog), this protein is Replication protein A 70 kDa DNA-binding subunit (rpa1).